The primary structure comprises 364 residues: Fructose-bisphosphate aldolase B (364 aa).

Alanine 2 carries the N-acetylalanine modification. An N6-succinyllysine modification is found at lysine 13. A Phosphoserine modification is found at serine 36. Threonine 39 carries the post-translational modification Phosphothreonine. Residue arginine 43 participates in beta-D-fructose 1,6-bisphosphate binding. Phosphothreonine is present on threonine 119. At lysine 121 the chain carries N6-succinyllysine. Residue serine 132 is modified to Phosphoserine. Glutamate 188 (proton acceptor) is an active-site residue. Lysine 230 functions as the Schiff-base intermediate with dihydroxyacetone-P in the catalytic mechanism. 4 positions are modified to phosphoserine: serine 272, serine 276, serine 299, and serine 301. 272–274 (SGG) is a beta-D-fructose 1,6-bisphosphate binding site. Arginine 304 is a beta-D-fructose 1,6-bisphosphate binding site. Serine 309 carries the post-translational modification Phosphoserine. Position 317 is an N6-succinyllysine (lysine 317).

This sequence belongs to the class I fructose-bisphosphate aldolase family. As to quaternary structure, homotetramer. Interacts with BBS1, BBS2, BBS4 and BBS7. Forms a ternary complex with G6PD and TP53; this interaction is direct.

It is found in the cytoplasm. The protein localises to the cytosol. The protein resides in the cytoskeleton. It localises to the microtubule organizing center. Its subcellular location is the centrosome. It is found in the centriolar satellite. It catalyses the reaction beta-D-fructose 1,6-bisphosphate = D-glyceraldehyde 3-phosphate + dihydroxyacetone phosphate. The catalysed reaction is beta-D-fructose 1-phosphate = D-glyceraldehyde + dihydroxyacetone phosphate. It functions in the pathway carbohydrate degradation; glycolysis; D-glyceraldehyde 3-phosphate and glycerone phosphate from D-glucose: step 4/4. It participates in carbohydrate biosynthesis; gluconeogenesis. Its pathway is carbohydrate metabolism; fructose metabolism. Catalyzes the aldol cleavage of fructose 1,6-biphosphate to form two triosephosphates dihydroxyacetone phosphate and D-glyceraldehyde 3-phosphate in glycolysis as well as the reverse stereospecific aldol addition reaction in gluconeogenesis. In fructolysis, metabolizes fructose 1-phosphate derived from the phosphorylation of dietary fructose by fructokinase into dihydroxyacetone phosphate and D-glyceraldehyde. Acts as an adapter independently of its enzymatic activity, exerts a tumor suppressor role by stabilizing the ternary complex with G6PD and TP53 to inhibit G6PD activity and keep oxidative pentose phosphate metabolism in check. This Ovis aries (Sheep) protein is Fructose-bisphosphate aldolase B (ALDOB).